We begin with the raw amino-acid sequence, 533 residues long: Atypical kinase COQ8B, mitochondrial (533 aa).

A helical transmembrane segment spans residues 93 to 109 (LASFGGLAVGLGLGALA). The short motif at 156–159 (KIGQ) is the KxGQ motif element. Positions 192-424 (MMRVLEEELG…DRVLQKSQDL (233 aa)) constitute a Protein kinase domain. The AAAS motif motif lies at 217 to 220 (AAAS). Residues serine 220, lysine 238, and 325 to 328 (MELA) contribute to the ATP site. The active-site Proton acceptor is aspartate 368. ATP-binding residues include asparagine 373 and aspartate 387.

This sequence belongs to the protein kinase superfamily. ADCK protein kinase family. As to quaternary structure, homodimer; homodimerizes via its transmembrane region. Interacts with COQ6 and COQ7. Interacts with the multi-subunit COQ enzyme complex, composed of at least COQ3, COQ4, COQ5, COQ6, COQ7 and COQ9.

The protein resides in the mitochondrion membrane. It localises to the cytoplasm. It is found in the cytosol. Its subcellular location is the cell membrane. It participates in cofactor biosynthesis; ubiquinone biosynthesis. In terms of biological role, atypical kinase involved in the biosynthesis of coenzyme Q, also named ubiquinone, an essential lipid-soluble electron transporter for aerobic cellular respiration. Its substrate specificity is still unclear: may act as a protein kinase that mediates phosphorylation of COQ3. According to other reports, acts as a small molecule kinase, possibly a lipid kinase that phosphorylates a prenyl lipid in the ubiquinone biosynthesis pathway, as suggested by its ability to bind coenzyme Q lipid intermediates. However, the small molecule kinase activity was not confirmed by another publication. Required for podocyte migration. The sequence is that of Atypical kinase COQ8B, mitochondrial from Mus musculus (Mouse).